We begin with the raw amino-acid sequence, 229 residues long: Glycerol-3-phosphate acyltransferase (229 aa).

6 helical membrane passes run 2 to 22, 56 to 76, 93 to 113, 129 to 149, 151 to 171, and 178 to 198; these read WSLT…GALW, LATV…ASVI, FVVL…YPIF, LFAL…AVLL, SRYV…IVAL, and ADLD…IVVA.

Belongs to the PlsY family. In terms of assembly, probably interacts with PlsX.

Its subcellular location is the cell inner membrane. It catalyses the reaction an acyl phosphate + sn-glycerol 3-phosphate = a 1-acyl-sn-glycero-3-phosphate + phosphate. The protein operates within lipid metabolism; phospholipid metabolism. Catalyzes the transfer of an acyl group from acyl-phosphate (acyl-PO(4)) to glycerol-3-phosphate (G3P) to form lysophosphatidic acid (LPA). This enzyme utilizes acyl-phosphate as fatty acyl donor, but not acyl-CoA or acyl-ACP. The protein is Glycerol-3-phosphate acyltransferase of Salinibacter ruber (strain DSM 13855 / M31).